We begin with the raw amino-acid sequence, 400 residues long: MNFLLCIFKGVYVIKLIQRFFKLESAGGILLLFSAVVAMLLANSPLSNQYNDFLNLPVSLQIGSFSINKTLIHWINDGFMAVFFVLVGMEVKKELFEGALSTYQQAIFPAIAAIGGMVIPAVVYWFIAKQDPSLANGWAIPMATDIAFALGIMALLSKQVPLPLKIFLLALAIIDDLGAIVVIALFFSHGLSVQALIFSAVAIIVLILLNRFRVSALCAYMVVGAILWASVLKSGVHATLAGVIIGFSIPLKGKKGERPLDDFEHILASWSSFVILPLFAFANAGVSFAGIDVNMISSPLLLAIASGLIIGKPVGIFGFSYISVKLGLAKLPDGINFKQIFAVAVLCGIGFTMSMFLASLAFDANAGESVNTLSRLGILLGSTVSAILGYLFLKQTTKLN.

The next 11 helical transmembrane spans lie at 26-46, 71-91, 107-127, 137-157, 166-186, 189-209, 225-245, 273-293, 299-319, 340-360, and 373-393; these read AGGI…NSPL, LIHW…GMEV, IFPA…YWFI, GWAI…ALLS, IFLL…IALF, HGLS…LILL, AILW…GVII, FVIL…GIDV, PLLL…IFGF, IFAV…LASL, and LSRL…YLFL.

This sequence belongs to the NhaA Na(+)/H(+) (TC 2.A.33) antiporter family.

The protein localises to the cell inner membrane. It catalyses the reaction Na(+)(in) + 2 H(+)(out) = Na(+)(out) + 2 H(+)(in). Na(+)/H(+) antiporter that extrudes sodium in exchange for external protons. This chain is Na(+)/H(+) antiporter NhaA, found in Haemophilus influenzae (strain ATCC 51907 / DSM 11121 / KW20 / Rd).